We begin with the raw amino-acid sequence, 470 residues long: Protein C-ets-2 (470 aa).

Residues 85-170 (ATFSGFKKEQ…EHLEQMIKEN (86 aa)) enclose the PNT domain. S225 carries the post-translational modification Phosphoserine. The segment at 270-291 (ASGKPRDHDSAETGGDSFESSE) is disordered. A phosphoserine mark is found at S296, S299, and S302. Residues 364–444 (IQLWQFLLEL…SGKRYVYRFV (81 aa)) constitute a DNA-binding region (ETS).

Belongs to the ETS family. In terms of processing, phosphorylation by CDK10 at Ser-225 may create a phosphodegron that targets ETS2 for proteasomal degradation.

The protein localises to the nucleus. In terms of biological role, transcription factor activating transcription. Binds specifically the GGA DNA motif in gene promoters and stimulates transcription of those genes. The chain is Protein C-ets-2 (ETS2) from Bos taurus (Bovine).